A 227-amino-acid polypeptide reads, in one-letter code: Orotidine 5'-phosphate decarboxylase (227 aa).

Residues Asp8, Lys30, 59–68, Thr118, Arg178, Gln187, Gly207, and Arg208 each bind substrate; that span reads DLKLYDIPYT. Lys61 functions as the Proton donor in the catalytic mechanism.

Belongs to the OMP decarboxylase family. Type 1 subfamily. In terms of assembly, homodimer.

It catalyses the reaction orotidine 5'-phosphate + H(+) = UMP + CO2. It participates in pyrimidine metabolism; UMP biosynthesis via de novo pathway; UMP from orotate: step 2/2. Its function is as follows. Catalyzes the decarboxylation of orotidine 5'-monophosphate (OMP) to uridine 5'-monophosphate (UMP). The chain is Orotidine 5'-phosphate decarboxylase from Helicobacter pylori (strain ATCC 700392 / 26695) (Campylobacter pylori).